The primary structure comprises 252 residues: MKTVTVKDLVIGTGAPKIIVSLMAKDIASVKSEALAYREADFDILEWRVDHYADLSNVESVIAAAKILRETMPEKPLLFTFRSAKEGGEQAISTEAYIALNRAAIDSGLVDMIDLELFTGDDQVKETVAYAHAHDVKVVMSNHDFHKTPEAEEIIARLRKMQSFDADIPKIALMPQSTSDVLTLLAATLEMQEQYADRPIITMSMAKTGVISRLAGEVFGSAATFGAVKKASAPGQISVNDLRTVLTILHQA.

Residues serine 21, 46-48, and arginine 82 contribute to the 3-dehydroquinate site; that span reads EWR. Histidine 143 serves as the catalytic Proton donor/acceptor. The active-site Schiff-base intermediate with substrate is the lysine 170. Arginine 213, serine 232, and glutamine 236 together coordinate 3-dehydroquinate.

The protein belongs to the type-I 3-dehydroquinase family. As to quaternary structure, homodimer.

The enzyme catalyses 3-dehydroquinate = 3-dehydroshikimate + H2O. It functions in the pathway metabolic intermediate biosynthesis; chorismate biosynthesis; chorismate from D-erythrose 4-phosphate and phosphoenolpyruvate: step 3/7. In terms of biological role, involved in the third step of the chorismate pathway, which leads to the biosynthesis of aromatic amino acids. Catalyzes the cis-dehydration of 3-dehydroquinate (DHQ) and introduces the first double bond of the aromatic ring to yield 3-dehydroshikimate. This is 3-dehydroquinate dehydratase from Escherichia coli O127:H6 (strain E2348/69 / EPEC).